A 656-amino-acid polypeptide reads, in one-letter code: NADH-ubiquinone oxidoreductase chain 5 (656 aa).

17 helical membrane-spanning segments follow: residues 5 to 23 (IIILPVLGSIVAGFFGRKL), 30 to 52 (IITCSCVIVTTILALLAWVEVGF), 81 to 103 (LTVSMLLPVLIISSLVHIYSISY), 112 to 129 (RFFSYLSLFTFMMIILVT), 133 to 155 (YLLMFVGWEGVGVCSYLLVSFWF), 168 to 190 (FLTNRVGDCFLTIGMFAILWSLG), 200 to 222 (LAPYINENIITIIGICLVIGAMA), 243 to 262 (VSALIHAATMVTAGVYLLMR), 272 to 294 (TVLLICLWLGAITTVFSSLVGLF), 301 to 320 (VIAYSTMSQLGLMVVAIGLS), 324 to 346 (IALFHLVNHAFYKAALFLGAGSI), 367 to 389 (PLTYSIILIASLSLAAFPFLTGF), 409 to 431 (SVYAISTIGAIFTTLYSVKVIYL), 452 to 471 (IFLTLPLVILAIFSIFFGYL), 514 to 536 (FIFTVLFSILAILLSEFIPGSVF), 607 to 629 (LSTGVVTSYALYILLGLISFIII), and 634 to 653 (QISSSLIVLLIILTLFSLNF).

Belongs to the complex I subunit 5 family.

It localises to the mitochondrion inner membrane. The catalysed reaction is a ubiquinone + NADH + 5 H(+)(in) = a ubiquinol + NAD(+) + 4 H(+)(out). Functionally, core subunit of the mitochondrial membrane respiratory chain NADH dehydrogenase (Complex I) that is believed to belong to the minimal assembly required for catalysis. Complex I functions in the transfer of electrons from NADH to the respiratory chain. The immediate electron acceptor for the enzyme is believed to be ubiquinone. The sequence is that of NADH-ubiquinone oxidoreductase chain 5 (ND5) from Cryphonectria parasitica (Chestnut blight fungus).